Reading from the N-terminus, the 95-residue chain is Pyruvate dehydrogenase inhibitor (95 aa).

This sequence belongs to the HesB/IscA family. Interacts with the E1 module of pyruvate dehydrogenase (PdhA-PdhB).

Acts as an inhibitor of the pyruvate dehydrogenase. Overexpression does not affect growth with glucose as the main carbon source, but it leads to a dramatic growth defect when cells are grown with pyruvate as the sole carbon source. In Bacillus subtilis (strain 168), this protein is Pyruvate dehydrogenase inhibitor.